Here is a 362-residue protein sequence, read N- to C-terminus: Type-2 angiotensin II receptor (362 aa).

Topologically, residues 1-44 (MKANFSLATISKNITSSLHVGFVNISSNESTFNCSHKPSDKHLD) are extracellular. Residues Asn-4, Asn-13, Asn-24, Asn-28, and Asn-33 are each glycosylated (N-linked (GlcNAc...) asparagine). 2 disulfide bridges follow: Cys-34–Cys-289 and Cys-116–Cys-194. The chain crosses the membrane as a helical span at residues 45 to 69 (AIPVLYYIIFGVGFLVNTIVVTLFC). Residues 70-79 (CQKGPKKVSS) lie on the Cytoplasmic side of the membrane. The helical transmembrane segment at 80–103 (IYIFNLAVADLLLLATLPLWATYY) threads the bilayer. Residues Tyr-102 and Tyr-103 each coordinate angiotensin II. Over 104–113 (SHRYDWIFGP) the chain is Extracellular. The chain crosses the membrane as a helical span at residues 114-139 (VMCKVFGSFLTLNMFASIFFITCMSV). The Cytoplasmic segment spans residues 140 to 158 (DRYQSVIYPFLSQRRNPWQ). Residues 159 to 180 (ASYIVPLVWCMACLSSLPTFYF) traverse the membrane as a helical segment. Angiotensin II contacts are provided by Arg-181, Tyr-203, and Lys-214. The Extracellular portion of the chain corresponds to 181–205 (RDVRTIEYLGVNACIMAFPPEKYAQ). Residues 206-231 (WSAGIALMKNILGFIIPLIFIATCYF) traverse the membrane as a helical segment. Residues 232–256 (GIRKHLLKTNSYGKNRITRDQVLKM) lie on the Cytoplasmic side of the membrane. Residues 257 to 280 (AAAVVLAFIICWLPFHVLTFLDAL) traverse the membrane as a helical segment. Asp-278 contacts angiotensin II. Residues 281–293 (AWMGVINSCEVIA) are Extracellular-facing. The chain crosses the membrane as a helical span at residues 294 to 319 (VIDLALPFAILLGFTNSCINPFLYCF). Position 296 (Asp-296) interacts with angiotensin II. The Cytoplasmic portion of the chain corresponds to 320 to 362 (VGNRFQQKLRRVFRVPITWLQGKRENGSCGKSSSFREMETFVS). A helix VIII region spans residues 323 to 332 (RFQQKLRRVF).

The protein belongs to the G-protein coupled receptor 1 family. In terms of assembly, interacts with MTUS1.

It is found in the cell membrane. In terms of biological role, receptor for angiotensin II, a vasoconstricting peptide. Signals primarily via a non-canonical G-protein- and beta-arrestin independent pathways. Cooperates with MTUS1 to inhibit ERK2 activation and cell proliferation. This Ovis aries (Sheep) protein is Type-2 angiotensin II receptor (AGTR2).